Here is a 145-residue protein sequence, read N- to C-terminus: Large ribosomal subunit protein bL19 (145 aa).

Belongs to the bacterial ribosomal protein bL19 family.

Functionally, this protein is located at the 30S-50S ribosomal subunit interface and may play a role in the structure and function of the aminoacyl-tRNA binding site. In Brucella abortus (strain S19), this protein is Large ribosomal subunit protein bL19.